A 257-amino-acid polypeptide reads, in one-letter code: Putative B3 domain-containing protein At2g27410 (257 aa).

The disordered stretch occupies residues 5–50 (ARTTKINHFRGTSTTQNPNRGLEPSPSSYVTRRSKEKRPINVEKRS). Polar residues predominate over residues 8 to 35 (TKINHFRGTSTTQNPNRGLEPSPSSYVT). Residues 115 to 209 (TPDFLTEDET…KLCFALTPKN (95 aa)) constitute a DNA-binding region (TF-B3). The segment at 212-257 (RGNSLPGGDGASTSGESGQVPLPIPPARYSSNSGQGCSGESSSSSS) is disordered. The span at 241–257 (SSNSGQGCSGESSSSSS) shows a compositional bias: low complexity.

Its subcellular location is the nucleus. The protein is Putative B3 domain-containing protein At2g27410 of Arabidopsis thaliana (Mouse-ear cress).